Consider the following 255-residue polypeptide: NAD kinase (255 aa).

D44 serves as the catalytic Proton acceptor. Residues 44–45 (DG), H49, 114–115 (NE), D144, A152, 155–160 (SAYNLS), and Q216 each bind NAD(+).

This sequence belongs to the NAD kinase family. A divalent metal cation is required as a cofactor.

Its subcellular location is the cytoplasm. The catalysed reaction is NAD(+) + ATP = ADP + NADP(+) + H(+). Its function is as follows. Involved in the regulation of the intracellular balance of NAD and NADP, and is a key enzyme in the biosynthesis of NADP. Catalyzes specifically the phosphorylation on 2'-hydroxyl of the adenosine moiety of NAD to yield NADP. The protein is NAD kinase of Rickettsia canadensis (strain McKiel).